We begin with the raw amino-acid sequence, 380 residues long: 3-dehydroquinate synthase (380 aa).

The protein belongs to the archaeal-type DHQ synthase family.

It carries out the reaction 2-amino-2,3,7-trideoxy-D-lyxo-hept-6-ulosonate + NAD(+) + H2O = 3-dehydroquinate + NH4(+) + NADH + H(+). In terms of biological role, catalyzes the oxidative deamination and cyclization of 2-amino-3,7-dideoxy-D-threo-hept-6-ulosonic acid (ADH) to yield 3-dehydroquinate (DHQ), which is fed into the canonical shikimic pathway of aromatic amino acid biosynthesis. This chain is 3-dehydroquinate synthase, found in Methanosarcina barkeri (strain Fusaro / DSM 804).